We begin with the raw amino-acid sequence, 366 residues long: Fructose-bisphosphate aldolase 2 (366 aa).

R60 and K150 together coordinate substrate. The active-site Proton acceptor is E191. The active-site Schiff-base intermediate with dihydroxyacetone-P is the K233.

The protein belongs to the class I fructose-bisphosphate aldolase family.

It carries out the reaction beta-D-fructose 1,6-bisphosphate = D-glyceraldehyde 3-phosphate + dihydroxyacetone phosphate. The protein operates within carbohydrate degradation; glycolysis; D-glyceraldehyde 3-phosphate and glycerone phosphate from D-glucose: step 4/4. The protein is Fructose-bisphosphate aldolase 2 (aldo-2) of Caenorhabditis elegans.